The chain runs to 428 residues: Homocitrate synthase, cytosolic isozyme (428 aa).

Positions 23–276 (FQLIDSTLRE…KSKYKLHKIR (254 aa)) constitute a Pyruvate carboxyltransferase domain. Arginine 31 serves as a coordination point for 2-oxoglutarate. Residue glutamate 32 coordinates Mg(2+). 3 residues coordinate 2-oxoglutarate: histidine 91, arginine 151, and threonine 185. 2 residues coordinate Mg(2+): histidine 212 and histidine 214. Histidine 309 (proton acceptor) is an active-site residue. Residue serine 385 is modified to Phosphoserine. Position 396 is a phosphothreonine (threonine 396). The tract at residues 399 to 428 (VLSAKKNKKNDSDVPELATIPAAKRTKPSA) is disordered. Serine 401 and serine 410 each carry phosphoserine.

It belongs to the alpha-IPM synthase/homocitrate synthase family. Homocitrate synthase LYS20/LYS21 subfamily. It depends on Mg(2+) as a cofactor. Mn(2+) serves as cofactor.

The protein localises to the cytoplasm. It carries out the reaction acetyl-CoA + 2-oxoglutarate + H2O = (2R)-homocitrate + CoA + H(+). It functions in the pathway amino-acid biosynthesis; L-lysine biosynthesis via AAA pathway; L-alpha-aminoadipate from 2-oxoglutarate: step 1/5. In terms of biological role, catalyzes the aldol-type condensation of 2-oxoglutarate with acetyl-CoA to yield homocitrate. Carries out the first step of the alpha-aminoadipate (AAA) lysine biosynthesis pathway. This Saccharomyces cerevisiae (strain ATCC 204508 / S288c) (Baker's yeast) protein is Homocitrate synthase, cytosolic isozyme (LYS20).